The chain runs to 148 residues: Putative nickel-responsive regulator (148 aa).

Positions 88, 99, 101, and 107 each coordinate Ni(2+).

It belongs to the transcriptional regulatory CopG/NikR family. Ni(2+) serves as cofactor.

In terms of biological role, transcriptional regulator. This chain is Putative nickel-responsive regulator, found in Helicobacter pylori (strain P12).